The sequence spans 291 residues: Trimeric intracellular cation channel type B (291 aa).

At 1–19 (MDSPWDELALAFSRTSMFP) the chain is on the lumenal side. Residues 20 to 33 (FFDIAHYLVSVMAV) traverse the membrane as a helical segment. Residues 34–50 (KRQPGAAALAWKNPISS) are Cytoplasmic-facing. Residues 51-70 (WFTAMLHCFGGGILSCLLLA) form a helical membrane-spanning segment. Topologically, residues 71–82 (EPPLKFLANHTN) are lumenal. A helical membrane pass occupies residues 83–99 (ILLASSIWYITFFCPHD). The Cytoplasmic segment spans residues 100 to 104 (LVSQG). Residues 105–121 (YSYLPVQLLASGMKEVT) form a helical membrane-spanning segment. Residues K118 and R122 each coordinate a 1,2-diacyl-sn-glycero-3-phospho-(1D-myo-inositol-4,5-bisphosphate). At 122 to 139 (RTWKIVGGVTHANSYYKN) the chain is on the lumenal side. The helical transmembrane segment at 140–156 (GWIVMIAIGWARGAGGT) threads the bilayer. The Cytoplasmic segment spans residues 157–179 (IITNFERLVKGDWKPEGDEWLKM). A helical membrane pass occupies residues 180-195 (SYPAKVTLLGSVIFTF). Residues 196 to 207 (QHTQHLAISKHN) lie on the Lumenal side of the membrane. Residues 208-227 (LMFLYTIFIVATKITMMTTQ) form a helical membrane-spanning segment. Over 228–291 (TSTMTFAPFE…VKKKHTKKNE (64 aa)) the chain is Cytoplasmic. The disordered stretch occupies residues 256-291 (KKSEAKSPSNGVGSLASKPVDVASDNVKKKHTKKNE). S262 is subject to Phosphoserine.

The protein belongs to the TMEM38 family. Homotrimer; conformation seems to be controled by binding to diacylglycerol (DAG).

Its subcellular location is the endoplasmic reticulum membrane. It carries out the reaction K(+)(in) = K(+)(out). With respect to regulation, channel activity is activated by increased cytosolic Ca(2+) levels and blocked by luminal high Ca(2+) levels. Functionally, intracellular monovalent cation channel required for maintenance of rapid intracellular calcium release. Acts as a potassium counter-ion channel that functions in synchronization with calcium release from intracellular stores. Activated by increased cytosolic Ca(2+) levels. The polypeptide is Trimeric intracellular cation channel type B (Homo sapiens (Human)).